The chain runs to 277 residues: MKIIETKNLNYSYTQSSIRSIENVNFSVLDGEWITIVGKNGSGKSTLIRLLDGLLKADSGKIIIDGLTLSEKTLWEIRKKIGIVFQNPDNQFVSGSVIEDVAFGMENYQIPQEEMLVRAQQALKTVGMIDFAEKSPVRLSGGQKQRVAIAGVLAIQPKILILDEAASMLDPDGRDEVWQTIKKLKEQQNLTVISVNHDLNELNLSDRVILLNDGKIAADTKINQLFSDSELLSKNDLKLPFLQQLQKDLRESGINFTQEYNHQRELVNFLWKSISGT.

In terms of domain architecture, ABC transporter spans 4–238; sequence IETKNLNYSY…SELLSKNDLK (235 aa). 38–45 lines the ATP pocket; sequence GKNGSGKS.

Belongs to the ABC transporter superfamily. Energy-coupling factor EcfA family. In terms of assembly, forms a stable energy-coupling factor (ECF) transporter complex composed of 2 membrane-embedded substrate-binding proteins (S component), 2 ATP-binding proteins (A component) and 2 transmembrane proteins (T component).

The protein localises to the cell membrane. Functionally, ATP-binding (A) component of a common energy-coupling factor (ECF) ABC-transporter complex. Unlike classic ABC transporters this ECF transporter provides the energy necessary to transport a number of different substrates. In Oenococcus oeni (strain ATCC BAA-331 / PSU-1), this protein is Energy-coupling factor transporter ATP-binding protein EcfA1.